A 432-amino-acid chain; its full sequence is Alpha-galactosidase (432 aa).

NAD(+) is bound at residue 2 to 68 (KKITFIGAGS…PSVAINSYDD (67 aa)). N148 is a substrate binding site. Residue C169 coordinates Mn(2+). The active-site Proton donor is H170. Residue H199 participates in Mn(2+) binding.

Belongs to the glycosyl hydrolase 4 family. In terms of assembly, homodimer. Mn(2+) is required as a cofactor. NAD(+) serves as cofactor.

Its subcellular location is the cytoplasm. It carries out the reaction Hydrolysis of terminal, non-reducing alpha-D-galactose residues in alpha-D-galactosides, including galactose oligosaccharides, galactomannans and galactolipids.. Its function is as follows. Catalyzes the hydrolysis of melibiose and alpha-galactosides of the raffinose family of oligosaccharides (RFOs) such as raffinose and stachyose. Cannot act on polymeric substrates such as locust bean gum. The polypeptide is Alpha-galactosidase (Bacillus subtilis (strain 168)).